Here is a 46-residue protein sequence, read N- to C-terminus: MSKRTLEGSHRKKVRKSGFLSRSQSPTGRRILKARRKKGRKMLVKY.

The tract at residues 1–46 is disordered; sequence MSKRTLEGSHRKKVRKSGFLSRSQSPTGRRILKARRKKGRKMLVKY. Residues 30 to 46 show a composition bias toward basic residues; that stretch reads RILKARRKKGRKMLVKY.

This sequence belongs to the bacterial ribosomal protein bL34 family.

Its subcellular location is the plastid. The protein localises to the cyanelle. The chain is Large ribosomal subunit protein bL34c (rpl34) from Cyanophora paradoxa.